The primary structure comprises 536 residues: Multicopper oxidase CueO (536 aa).

Positions 1-28 (MLRRDFLKYSVALGVASALPLWSRAAFA) form a signal peptide, tat-type signal. 3 consecutive Plastocyanin-like domains span residues 53 to 165 (KAGQ…IEDD), 229 to 295 (GWLR…AFDL), and 424 to 536 (FHNA…GFTV). Cu cation is bound by residues H101, H103, H141, and H143. Residues H463, H466, H468, H519, C520, H521, and H525 each coordinate Cu cation.

This sequence belongs to the multicopper oxidase family. In terms of assembly, monomer. Requires Cu cation as cofactor. In terms of processing, predicted to be exported by the Tat system. The position of the signal peptide cleavage has not been experimentally proven.

It is found in the periplasm. It catalyses the reaction 4 Cu(+) + O2 + 4 H(+) = 4 Cu(2+) + 2 H2O. Functionally, multicopper oxidase involved in copper homeostasis and copper tolerance under both aerobic and anaerobic conditions. Is responsible for the oxidation of Cu(+) to the less harmful Cu(2+) in the periplasm, thereby preventing Cu(+) from entering the cytoplasm. The polypeptide is Multicopper oxidase CueO (cueO) (Salmonella typhimurium (strain LT2 / SGSC1412 / ATCC 700720)).